The sequence spans 298 residues: Protease HtpX homolog (298 aa).

Helical transmembrane passes span 15 to 35 (LIMV…GYLF) and 39 to 59 (PWMG…IMWQ). H143 contributes to the Zn(2+) binding site. E144 is a catalytic residue. H147 is a binding site for Zn(2+). Transmembrane regions (helical) follow at residues 153 to 173 (ILLS…SGMA) and 197 to 217 (MIFK…SASL). E227 is a Zn(2+) binding site.

It belongs to the peptidase M48B family. It depends on Zn(2+) as a cofactor.

The protein localises to the cell membrane. The chain is Protease HtpX homolog from Lactobacillus helveticus (strain DPC 4571).